A 244-amino-acid chain; its full sequence is uncharacterized protein (244 aa).

Residues 1 to 78 form the WGR domain; that stretch reads MKKRFIYHDE…PKFNFMDRYY (78 aa).

This is an uncharacterized protein from Escherichia coli (strain K12).